Reading from the N-terminus, the 956-residue chain is Zinc finger CCHC domain-containing protein 14 (956 aa).

8 disordered regions span residues 25–50 (SSLNSGGGGGGGGGGGGKSAPGPSGA), 78–99 (ALHTSAHSTEESLPKRPLGKHG), 206–229 (SSSSPSQQLQSPSPGNPSLPKVGA), 243–276 (GIPSSQSSAQHHLQHSASTSASLPHCSHTGGTGS), 361–464 (KEKS…EKEK), 485–505 (PVQNETGSSPAAHHPLPPQLM), 543–583 (LEER…QGLS), and 750–786 (FYSGGAGSSSPGNIPASSQSHHHHHHHQQPPAPPQPA). Residues 29 to 43 (SGGGGGGGGGGGGKS) show a composition bias toward gly residues. 2 stretches are compositionally biased toward low complexity: residues 206 to 225 (SSSSPSQQLQSPSPGNPSLP) and 246 to 265 (SSQSSAQHHLQHSASTSASL). Residues 369–389 (LNSSAPSLVTSSGVARVTPTS) show a composition bias toward polar residues. Residues 423 to 432 (SSEYSSSSSS) show a composition bias toward low complexity. A compositionally biased stretch (basic and acidic residues) spans 438–464 (VREESSDSAEESDRRVDIHVEGTEKEK). Residues 750–768 (FYSGGAGSSSPGNIPASSQ) show a composition bias toward low complexity. A CCHC-type zinc finger spans residues 913 to 930 (LSCYNCGATGHRAQDCKQ).

The polypeptide is Zinc finger CCHC domain-containing protein 14 (Zcchc14) (Mus musculus (Mouse)).